Reading from the N-terminus, the 430-residue chain is Terminal nucleotidyltransferase 5B (430 aa).

Positions 1-46 are disordered; it reads MMPSESETESRDRAAAQVGTAAAAAVAKAAPAGGGPDPEASSASLG. The segment covering 15-44 has biased composition (low complexity); sequence AAQVGTAAAAAVAKAAPAGGGPDPEASSAS.

This sequence belongs to the TENT family.

The protein localises to the cytoplasm. The protein resides in the nucleus. The catalysed reaction is RNA(n) + ATP = RNA(n)-3'-adenine ribonucleotide + diphosphate. In terms of biological role, catalyzes the transfer of one adenosine molecule from an ATP to an mRNA poly(A) tail bearing a 3'-OH terminal group in an ATP hydrolysis-dependent manner. May be involved in maintaining the translation efficiency of at least some genes through preventing degradation of their mRNAs. Prefers RNA molecules that are adenosine-rich close to 3'-end. In addition, may inhibit cell proliferation and cell cycle progression through ubiquitination of beta-catenin/CTNNB1. In Bos taurus (Bovine), this protein is Terminal nucleotidyltransferase 5B.